A 404-amino-acid chain; its full sequence is Cysteine desulfurase IscS (404 aa).

Residues 75–76 (AT), Asn155, Gln183, and 203–205 (SAH) contribute to the pyridoxal 5'-phosphate site. Lys206 carries the post-translational modification N6-(pyridoxal phosphate)lysine. Thr243 is a pyridoxal 5'-phosphate binding site. Catalysis depends on Cys328, which acts as the Cysteine persulfide intermediate. Cys328 provides a ligand contact to [2Fe-2S] cluster.

This sequence belongs to the class-V pyridoxal-phosphate-dependent aminotransferase family. NifS/IscS subfamily. Homodimer. Forms a heterotetramer with IscU, interacts with other sulfur acceptors. Pyridoxal 5'-phosphate serves as cofactor.

It localises to the cytoplasm. The enzyme catalyses (sulfur carrier)-H + L-cysteine = (sulfur carrier)-SH + L-alanine. Its pathway is cofactor biosynthesis; iron-sulfur cluster biosynthesis. In terms of biological role, master enzyme that delivers sulfur to a number of partners involved in Fe-S cluster assembly, tRNA modification or cofactor biosynthesis. Catalyzes the removal of elemental sulfur atoms from cysteine to produce alanine. Functions as a sulfur delivery protein for Fe-S cluster synthesis onto IscU, an Fe-S scaffold assembly protein, as well as other S acceptor proteins. The sequence is that of Cysteine desulfurase IscS from Buchnera aphidicola subsp. Acyrthosiphon pisum (strain 5A).